The sequence spans 87 residues: Mitotic-spindle organizing protein 1 (87 aa).

Belongs to the MOZART1 family. In terms of assembly, part of the gamma-tubulin complex.

The protein resides in the cytoplasm. Its subcellular location is the cytoskeleton. It localises to the microtubule organizing center. It is found in the spindle pole body. Functionally, required for gamma-tubulin complex recruitment to the microtubule organizing center (MTOC). The polypeptide is Mitotic-spindle organizing protein 1 (Chaetomium globosum (strain ATCC 6205 / CBS 148.51 / DSM 1962 / NBRC 6347 / NRRL 1970) (Soil fungus)).